Consider the following 502-residue polypeptide: Protein DETOXIFICATION 7 (502 aa).

The next 12 helical transmembrane spans lie at Met-36 to Val-56, Ala-68 to Ala-88, Tyr-112 to Met-132, Pro-143 to Phe-163, Leu-182 to Tyr-202, Ile-208 to Ile-228, Ala-262 to Leu-282, Val-291 to Ala-311, Ala-331 to Leu-351, Ile-375 to Val-395, Ala-408 to Met-428, and Trp-436 to Phe-456.

The protein belongs to the multi antimicrobial extrusion (MATE) (TC 2.A.66.1) family.

The protein localises to the membrane. This is Protein DETOXIFICATION 7 from Arabidopsis thaliana (Mouse-ear cress).